A 320-amino-acid chain; its full sequence is Ribonuclease Z (320 aa).

Residues histidine 62, histidine 64, aspartate 66, histidine 67, histidine 139, aspartate 210, and histidine 268 each contribute to the Zn(2+) site. The active-site Proton acceptor is aspartate 66.

Belongs to the RNase Z family. Homodimer. The cofactor is Zn(2+).

The enzyme catalyses Endonucleolytic cleavage of RNA, removing extra 3' nucleotides from tRNA precursor, generating 3' termini of tRNAs. A 3'-hydroxy group is left at the tRNA terminus and a 5'-phosphoryl group is left at the trailer molecule.. Functionally, zinc phosphodiesterase, which displays some tRNA 3'-processing endonuclease activity. Probably involved in tRNA maturation, by removing a 3'-trailer from precursor tRNA. The chain is Ribonuclease Z from Cyanothece sp. (strain PCC 7425 / ATCC 29141).